Here is a 564-residue protein sequence, read N- to C-terminus: Eukaryotic translation initiation factor 3 subunit L (564 aa).

S2 carries the post-translational modification N-acetylserine. Position 21 is a phosphoserine (S21). The 207-residue stretch at D331–R537 folds into the PCI domain. An N6-acetyllysine mark is found at K465 and K549.

The protein belongs to the eIF-3 subunit L family. In terms of assembly, component of the eukaryotic translation initiation factor 3 (eIF-3) complex, which is composed of 13 subunits: EIF3A, EIF3B, EIF3C, EIF3D, EIF3E, EIF3F, EIF3G, EIF3H, EIF3I, EIF3J, EIF3K, EIF3L and EIF3M. The eIF-3 complex appears to include 3 stable modules: module A is composed of EIF3A, EIF3B, EIF3G and EIF3I; module B is composed of EIF3F, EIF3H, and EIF3M; and module C is composed of EIF3C, EIF3D, EIF3E, EIF3K and EIF3L. EIF3C of module C binds EIF3B of module A and EIF3H of module B, thereby linking the three modules. EIF3J is a labile subunit that binds to the eIF-3 complex via EIF3B. The eIF-3 complex interacts with RPS6KB1 under conditions of nutrient depletion. Mitogenic stimulation leads to binding and activation of a complex composed of MTOR and RPTOR, leading to phosphorylation and release of RPS6KB1 and binding of EIF4B to eIF-3. Interacts with RRN3.

The protein resides in the cytoplasm. Its function is as follows. Component of the eukaryotic translation initiation factor 3 (eIF-3) complex, which is required for several steps in the initiation of protein synthesis. The eIF-3 complex associates with the 40S ribosome and facilitates the recruitment of eIF-1, eIF-1A, eIF-2:GTP:methionyl-tRNAi and eIF-5 to form the 43S pre-initiation complex (43S PIC). The eIF-3 complex stimulates mRNA recruitment to the 43S PIC and scanning of the mRNA for AUG recognition. The eIF-3 complex is also required for disassembly and recycling of post-termination ribosomal complexes and subsequently prevents premature joining of the 40S and 60S ribosomal subunits prior to initiation. The eIF-3 complex specifically targets and initiates translation of a subset of mRNAs involved in cell proliferation, including cell cycling, differentiation and apoptosis, and uses different modes of RNA stem-loop binding to exert either translational activation or repression. The sequence is that of Eukaryotic translation initiation factor 3 subunit L from Pan troglodytes (Chimpanzee).